The following is a 346-amino-acid chain: Methionine import ATP-binding protein MetN (346 aa).

The ABC transporter domain maps to 2–243; the sequence is VRFEGISKTY…PKHPITQSFL (242 aa). 40–47 provides a ligand contact to ATP; it reads GRSGAGKS.

This sequence belongs to the ABC transporter superfamily. Methionine importer (TC 3.A.1.24) family. As to quaternary structure, the complex is composed of two ATP-binding proteins (MetN), two transmembrane proteins (MetI) and a solute-binding protein (MetQ).

The protein localises to the cell inner membrane. It carries out the reaction L-methionine(out) + ATP + H2O = L-methionine(in) + ADP + phosphate + H(+). The enzyme catalyses D-methionine(out) + ATP + H2O = D-methionine(in) + ADP + phosphate + H(+). Part of the ABC transporter complex MetNIQ involved in methionine import. Responsible for energy coupling to the transport system. This is Methionine import ATP-binding protein MetN from Bradyrhizobium diazoefficiens (strain JCM 10833 / BCRC 13528 / IAM 13628 / NBRC 14792 / USDA 110).